The sequence spans 863 residues: Leucine--tRNA ligase (863 aa).

A 'HIGH' region motif is present at residues 42 to 52 (PYPSGRLHMGH). Residues 622–626 (KMSKS) carry the 'KMSKS' region motif. Position 625 (Lys625) interacts with ATP.

It belongs to the class-I aminoacyl-tRNA synthetase family.

It localises to the cytoplasm. It catalyses the reaction tRNA(Leu) + L-leucine + ATP = L-leucyl-tRNA(Leu) + AMP + diphosphate. This is Leucine--tRNA ligase from Shewanella loihica (strain ATCC BAA-1088 / PV-4).